A 134-amino-acid chain; its full sequence is Putative oxidoreductase CatD (134 aa).

4 helical membrane passes run 5–25, 46–66, 70–90, and 91–111; these read FEIGTLLLRVITGIIFFVHGL, FMAYVIAAIELIGGVLVFFGL, IVGVLFALTLIGAIITVKLKA, and PFMGNAEFDYLLLLTSIHLAL.

It belongs to the DoxX family.

It is found in the cell membrane. Its function is as follows. Essential for growth and viability in the presence of catechol and probably involved in the detoxification of catechol. This Bacillus subtilis (strain 168) protein is Putative oxidoreductase CatD (catD).